The primary structure comprises 448 residues: C4-dicarboxylate transport protein 2 (448 aa).

Transmembrane regions (helical) follow at residues 13 to 33, 49 to 69, 81 to 101, 149 to 169, 193 to 213, 227 to 247, 294 to 314, 335 to 355, and 357 to 377; these read SLYV…HFSP, LIKM…IAGM, LALL…LIVV, AFAK…GFAL, IVGI…AFTI, LMGA…GIVS, VVGL…SIYL, ITLL…TGSG, and IVLA…LALI.

Belongs to the dicarboxylate/amino acid:cation symporter (DAACS) (TC 2.A.23) family.

The protein resides in the cell inner membrane. Functionally, responsible for the transport of dicarboxylates such as succinate, fumarate, and malate from the periplasm across the membrane. The protein is C4-dicarboxylate transport protein 2 of Polaromonas naphthalenivorans (strain CJ2).